We begin with the raw amino-acid sequence, 191 residues long: Pyridoxal 5'-phosphate synthase subunit PdxT (191 aa).

Residue 52-54 (GES) coordinates L-glutamine. Cysteine 81 (nucleophile) is an active-site residue. L-glutamine-binding positions include arginine 108 and 136 to 137 (IR). Active-site charge relay system residues include histidine 172 and glutamate 174.

This sequence belongs to the glutaminase PdxT/SNO family. As to quaternary structure, in the presence of PdxS, forms a dodecamer of heterodimers. Only shows activity in the heterodimer.

It carries out the reaction aldehydo-D-ribose 5-phosphate + D-glyceraldehyde 3-phosphate + L-glutamine = pyridoxal 5'-phosphate + L-glutamate + phosphate + 3 H2O + H(+). The enzyme catalyses L-glutamine + H2O = L-glutamate + NH4(+). It participates in cofactor biosynthesis; pyridoxal 5'-phosphate biosynthesis. Catalyzes the hydrolysis of glutamine to glutamate and ammonia as part of the biosynthesis of pyridoxal 5'-phosphate. The resulting ammonia molecule is channeled to the active site of PdxS. The sequence is that of Pyridoxal 5'-phosphate synthase subunit PdxT from Actinobacillus pleuropneumoniae serotype 7 (strain AP76).